We begin with the raw amino-acid sequence, 451 residues long: F-box/kelch-repeat protein At1g74510 (451 aa).

Positions 93–139 (SSPVTRLDQNALLNCLAHCSLSDFGSIASTNRTFRSLIKDSELYRLR) constitute an F-box domain. Kelch repeat units lie at residues 137-188 (RLRR…KESL), 193-236 (ELLV…SLGE), 237-284 (IAVI…FMDG), 286-333 (FYCI…DQAK), and 349-395 (AVVK…GMAF).

The polypeptide is F-box/kelch-repeat protein At1g74510 (Arabidopsis thaliana (Mouse-ear cress)).